A 445-amino-acid polypeptide reads, in one-letter code: Cyclic GMP-AMP phosphodiesterase SMPDL3A (445 aa).

Residues 1–22 form the signal peptide; the sequence is MALLGNFLCCLLVAWLCGPGLG. Residues D42 and H44 each contribute to the Zn(2+) site. C59 and C78 form a disulfide bridge. N66 is a glycosylation site (N-linked (GlcNAc...) asparagine). Zn(2+) is bound at residue D107. H111 is a binding site for ATP. Residue N128 is glycosylated (N-linked (GlcNAc...) asparagine). N148 serves as a coordination point for Zn(2+). ATP is bound by residues N148 and H149. N-linked (GlcNAc...) asparagine glycosylation is found at N219 and N235. A Zn(2+)-binding site is contributed by H249. Residue Y257 participates in ATP binding. Residues H290 and H292 each contribute to the Zn(2+) site. N-linked (GlcNAc...) asparagine glycans are attached at residues N353 and N364. 2 cysteine pairs are disulfide-bonded: C417–C421 and C427–C440.

This sequence belongs to the acid sphingomyelinase family. In terms of assembly, monomer. Homodimer; homodimerizes following 2',3'-cGAMP-binding. Zn(2+) serves as cofactor. In terms of processing, N-glycosylated. As to expression, detected in blood serum (at protein level).

The protein resides in the secreted. The enzyme catalyses 2',3'-cGAMP + H2O = 5'-pGpA(2'-5') + H(+). The catalysed reaction is 5'-pGpA(2'-5') + H2O = 5'-GpA(2'-5') + phosphate. It carries out the reaction a ribonucleoside 5'-triphosphate + H2O = a ribonucleoside 5'-diphosphate + phosphate + H(+). It catalyses the reaction ATP + H2O = ADP + phosphate + H(+). Its activity is regulated as follows. Requires micromolar levels of Zn(2+) for activity. Inhibited by millimolar levels of Zn(2+). Its function is as follows. Cyclic-nucleotide phosphodiesterase that acts as a negative regulator of innate immunity by mediating degradation of 2',3'-cGAMP, thereby inhibiting the cGAS-STING signaling. Specifically linearizes 2',3'-cGAMP into 2'5'-bond pGpA and further hydrolyzes pGpA to produce GpA. Also has in vitro nucleotide phosphodiesterase activity with nucleoside triphosphates, such as ATP. Has in vitro activity with p-nitrophenyl-TMP. Has lower activity with nucleoside diphosphates, and no activity with nucleoside monophosphates. Has in vitro activity with CDP-choline, giving rise to CMP and phosphocholine. Has in vitro activity with CDP-ethanolamine. Does not have sphingomyelin phosphodiesterase activity. This is Cyclic GMP-AMP phosphodiesterase SMPDL3A from Mus musculus (Mouse).